Consider the following 132-residue polypeptide: Myelin P2 protein (132 aa).

The residue at position 2 (serine 2) is an N-acetylserine. A (9Z)-octadecenoate-binding site is contributed by arginine 107. Arginine 107 provides a ligand contact to hexadecanoate. Residues cysteine 118 and cysteine 125 are joined by a disulfide bond. Arginine 127–tyrosine 129 is a (9Z)-octadecenoate binding site. Arginine 127–tyrosine 129 contacts hexadecanoate.

It belongs to the calycin superfamily. Fatty-acid binding protein (FABP) family. As to quaternary structure, monomer.

The protein localises to the cytoplasm. Functionally, may play a role in lipid transport protein in Schwann cells. May bind cholesterol. This chain is Myelin P2 protein (PMP2), found in Bos taurus (Bovine).